A 228-amino-acid chain; its full sequence is Sodium channel regulatory subunit beta-4 (228 aa).

The N-terminal stretch at Met-1–Ser-30 is a signal peptide. Positions Leu-31 to Phe-148 constitute an Ig-like C2-type domain. Residues Leu-31–Thr-161 lie on the Extracellular side of the membrane. N-linked (GlcNAc...) asparagine glycosylation is found at Asn-45, Asn-71, Asn-113, and Asn-142. An intrachain disulfide couples Cys-53 to Cys-131. Residues Val-162–Leu-182 form a helical membrane-spanning segment. Residues Leu-183–Val-228 lie on the Cytoplasmic side of the membrane. The segment at Lys-199–Val-228 is disordered. A compositionally biased stretch (polar residues) spans Val-203 to Asn-213. Residues Lys-219–Val-228 show a composition bias toward basic and acidic residues.

It belongs to the sodium channel auxiliary subunit SCN4B (TC 8.A.17) family. A voltage-gated sodium (Nav) channel consists of an ion-conducting pore-forming alpha subunit functional on its own that is regulated by one or more beta subunits. The beta subunit SCN4B is disulfide-linked to the pore-forming alpha subunit. Interacts with SCN1A; regulatory subunit of SCN1A/Nav1.1. Interacts with SCN2A; regulatory subunit of SCN2A/Nav1.2. In terms of processing, contains an interchain disulfide bond with SCN2A.

Its subcellular location is the cell membrane. Functionally, regulatory subunit of multiple voltage-gated sodium (Nav) channels directly mediating the depolarization of excitable membranes. Navs, also called VGSCs (voltage-gated sodium channels) or VDSCs (voltage-dependent sodium channels), operate by switching between closed and open conformations depending on the voltage difference across the membrane. In the open conformation they allow Na(+) ions to selectively pass through the pore, along their electrochemical gradient. The influx of Na+ ions provokes membrane depolarization, initiating the propagation of electrical signals throughout cells and tissues. The accessory beta subunits participate in localization and functional modulation of the Nav channels. Modulates the activity of SCN1A/Nav1.1. Modulates the activity of SCN2A/Nav1.2. The sequence is that of Sodium channel regulatory subunit beta-4 from Mus musculus (Mouse).